The sequence spans 430 residues: Phosphomethylpyrimidine synthase (430 aa).

Substrate-binding positions include Asn67, Met96, Tyr125, His161, 183 to 185, 224 to 227, and Glu263; these read SRG and DALR. A Zn(2+)-binding site is contributed by His267. Tyr290 serves as a coordination point for substrate. His331 contributes to the Zn(2+) binding site. Residues Cys406, Cys409, and Cys413 each contribute to the [4Fe-4S] cluster site.

This sequence belongs to the ThiC family. In terms of assembly, homodimer. Requires [4Fe-4S] cluster as cofactor.

The enzyme catalyses 5-amino-1-(5-phospho-beta-D-ribosyl)imidazole + S-adenosyl-L-methionine = 4-amino-2-methyl-5-(phosphooxymethyl)pyrimidine + CO + 5'-deoxyadenosine + formate + L-methionine + 3 H(+). It participates in cofactor biosynthesis; thiamine diphosphate biosynthesis. Functionally, catalyzes the synthesis of the hydroxymethylpyrimidine phosphate (HMP-P) moiety of thiamine from aminoimidazole ribotide (AIR) in a radical S-adenosyl-L-methionine (SAM)-dependent reaction. The protein is Phosphomethylpyrimidine synthase of Campylobacter jejuni subsp. jejuni serotype O:23/36 (strain 81-176).